The primary structure comprises 477 residues: Bifunctional protein HldE (477 aa).

The ribokinase stretch occupies residues methionine 1–threonine 318. Residue lysine 179 is modified to N6-acetyllysine. Asparagine 195–glutamate 198 contributes to the ATP binding site. The active site involves aspartate 264. Residues methionine 344–glycine 477 form a cytidylyltransferase region.

It in the N-terminal section; belongs to the carbohydrate kinase PfkB family. The protein in the C-terminal section; belongs to the cytidylyltransferase family. As to quaternary structure, homodimer.

It carries out the reaction D-glycero-beta-D-manno-heptose 7-phosphate + ATP = D-glycero-beta-D-manno-heptose 1,7-bisphosphate + ADP + H(+). The catalysed reaction is D-glycero-beta-D-manno-heptose 1-phosphate + ATP + H(+) = ADP-D-glycero-beta-D-manno-heptose + diphosphate. The protein operates within nucleotide-sugar biosynthesis; ADP-L-glycero-beta-D-manno-heptose biosynthesis; ADP-L-glycero-beta-D-manno-heptose from D-glycero-beta-D-manno-heptose 7-phosphate: step 1/4. It participates in nucleotide-sugar biosynthesis; ADP-L-glycero-beta-D-manno-heptose biosynthesis; ADP-L-glycero-beta-D-manno-heptose from D-glycero-beta-D-manno-heptose 7-phosphate: step 3/4. It functions in the pathway bacterial outer membrane biogenesis; LPS core biosynthesis. In terms of biological role, catalyzes the phosphorylation of D-glycero-D-manno-heptose 7-phosphate at the C-1 position to selectively form D-glycero-beta-D-manno-heptose-1,7-bisphosphate. Catalyzes the ADP transfer from ATP to D-glycero-beta-D-manno-heptose 1-phosphate, yielding ADP-D-glycero-beta-D-manno-heptose. The protein is Bifunctional protein HldE of Escherichia coli O157:H7.